The following is a 73-amino-acid chain: MSDEKTQLIEAFYNFDGDYDGFVSVEEFRGIIRDGLPMTEAEITEFFEAADPNNTGFIDYKAFAAMLYSVDES.

2 consecutive EF-hand domains span residues 3-38 and 38-73; these read DEKT…GLPM and MTEA…VDES. Residues D16, D18, D20, and E27 each contribute to the Ca(2+) site.

In terms of assembly, myosin I is a dimer of a heavy and a light chain. Inability to self-assemble into filaments. Interacts with myoB. Does not interact with myoC or myoD.

Functionally, functions as the light chain for myosin-B. Binds calcium with submicromolar affinity and may sense physiological calcium changes. This is Myosin-IB light chain (mlcB) from Dictyostelium discoideum (Social amoeba).